The following is a 589-amino-acid chain: BTB/POZ domain and ankyrin repeat-containing protein NPR3 (589 aa).

Residues 1–25 (METSTISFSSSSPPSPPPPQPAPGD) are disordered. Residues 13–22 (PPSPPPPQPA) are compositionally biased toward pro residues. Residues 52-137 (AEIVLASGGG…LYTGRLRSAP (86 aa)) form the BTB domain. The C2HC NPR-type zinc-finger motif lies at 140 to 154 (AAACLDDGCSHDACR). Residues Cys-143, Cys-148, His-150, and Cys-153 each contribute to the Zn(2+) site. 3 ANK repeats span residues 260-290 (KRVRNIHKALDSDDVDLVGMLLKESPVTLDD), 292-319 (FAIHYAAAYCEPKVLAELLKLESANVNL), and 323-352 (SGYTPLHMACMRREPDIIVSLIEKGASVLE). The salicylic acid-binding core (SBC) stretch occupies residues 382 to 521 (ERSKAYLCIG…LDKFLNEEST (140 aa)). Arg-433 contributes to the salicylate binding site. The tract at residues 555–589 (DKAAGAAISSSTSASSSPRYETKLRPGNKKGKLSR) is disordered. Over residues 558 to 571 (AGAAISSSTSASSS) the composition is skewed to low complexity. The span at 580–589 (PGNKKGKLSR) shows a compositional bias: basic residues.

Belongs to the plant 'ANKYRIN-BTB/POZ' family. 'NPR1-like' subfamily. In terms of assembly, interacts with TGA2.1, TGA2.2, TGA2.3, LG2, TGAL1, TGAL4, NRR, RH1, RH2 and RH3.

It is found in the nucleus. It participates in protein modification; protein ubiquitination. In terms of biological role, salicylic acid (SA)-binding substrate-specific adapter of an E3 ubiquitin-protein ligase complex (CUL3-RBX1-BTB) which mediates the ubiquitination and subsequent proteasomal degradation of target proteins. Involved in defense response against the bacterial blight disease caused by Xanthomonas oryzae pv. oryzae (Xoo). Plants expressing an NPR3/NH3 transgene driven by its native promoter show enhanced resistance to the Xoo pathogen, and exhibit elevated sensitivity to benzothiadiazole (BTH) treatment and enhanced induction of defense-related genes upon treatment with BTH. Intriguingly, constitutive over-expression of NPR3/NH3 with a ubiquitin promoter does not confer disease resistance to Xoo. This Oryza sativa subsp. japonica (Rice) protein is BTB/POZ domain and ankyrin repeat-containing protein NPR3.